The chain runs to 278 residues: Aquaporin NIP3-3 (278 aa).

2 helical membrane passes run 70-90 and 99-119; these read VSAE…TIIM and TLLG…LSLI. The short motif at 127-129 is the NPA 1 element; the sequence is NPA. 3 consecutive transmembrane segments (helical) span residues 141–163, 185–205, and 213–233; these read PSAH…SFAV, AFFV…ALAT, and LIAV…GPST. An NPA 2 motif is present at residues 238–240; sequence NPA. The helical transmembrane segment at 255–275 threads the bilayer; sequence IWVYLVATPLGAIAGTGAYVA.

The protein belongs to the MIP/aquaporin (TC 1.A.8) family. NIP (TC 1.A.8.12) subfamily. Expressed in leaves and at lower levels in roots and anthers.

Its subcellular location is the membrane. Its function is as follows. Aquaporins facilitate the transport of water and small neutral solutes across cell membranes. In Oryza sativa subsp. japonica (Rice), this protein is Aquaporin NIP3-3 (NIP3-3).